The chain runs to 412 residues: Multifunctional CCA protein (412 aa).

ATP is bound by residues Gly-8 and Arg-11. CTP is bound by residues Gly-8 and Arg-11. Mg(2+) contacts are provided by Asp-21 and Asp-23. ATP contacts are provided by Arg-91, Arg-137, and Arg-140. CTP contacts are provided by Arg-91, Arg-137, and Arg-140. Positions 225–326 constitute an HD domain; that stretch reads TGIHVMMVID…ADMLQATDAY (102 aa).

The protein belongs to the tRNA nucleotidyltransferase/poly(A) polymerase family. Bacterial CCA-adding enzyme type 1 subfamily. In terms of assembly, monomer. Can also form homodimers and oligomers. Mg(2+) is required as a cofactor. Requires Ni(2+) as cofactor.

The catalysed reaction is a tRNA precursor + 2 CTP + ATP = a tRNA with a 3' CCA end + 3 diphosphate. The enzyme catalyses a tRNA with a 3' CCA end + 2 CTP + ATP = a tRNA with a 3' CCACCA end + 3 diphosphate. Catalyzes the addition and repair of the essential 3'-terminal CCA sequence in tRNAs without using a nucleic acid template. Adds these three nucleotides in the order of C, C, and A to the tRNA nucleotide-73, using CTP and ATP as substrates and producing inorganic pyrophosphate. tRNA 3'-terminal CCA addition is required both for tRNA processing and repair. Also involved in tRNA surveillance by mediating tandem CCA addition to generate a CCACCA at the 3' terminus of unstable tRNAs. While stable tRNAs receive only 3'-terminal CCA, unstable tRNAs are marked with CCACCA and rapidly degraded. In Nitrosomonas europaea (strain ATCC 19718 / CIP 103999 / KCTC 2705 / NBRC 14298), this protein is Multifunctional CCA protein.